Reading from the N-terminus, the 956-residue chain is Bromodomain testis-specific protein (956 aa).

One can recognise a Bromo 1 domain in the interval R26–M132. Residue S186 is modified to Phosphoserine. Positions K208–P219 match the Nuclear localization signal motif. The segment at V210–P239 is disordered. Residues T216–P231 show a composition bias toward polar residues. Residues V266–I375 form the Bromo 2 domain. Disordered stretches follow at residues N391–Q420, V442–Y508, N607–Q747, and L859–A934. The span at S392–A409 shows a compositional bias: low complexity. Positions E417–V442 form a coiled coil. The span at R445 to V463 shows a compositional bias: basic residues. In terms of domain architecture, NET spans K496–P578. Over residues P625 to E640 the composition is skewed to pro residues. The span at D649–S688 shows a compositional bias: low complexity. The span at K714 to T724 shows a compositional bias: polar residues. The stretch at E844–D940 forms a coiled coil. Basic and acidic residues-rich tracts occupy residues L859–R874 and L915–A934.

The protein belongs to the BET family. In terms of assembly, interacts with SMARCE1. Interacts with mRNA splicing machinery proteins SRSF2, DDX5, HNRNPK and TARDBP. Interacts with the acetylated N-terminus of histone H1, H2, H3 and H4. Interacts with P-TEFb components CDK9 and CCNT1/cyclin-T1. In terms of processing, ubiquitinated in a SPOP-dependent manner, leading to proteasomal degradation. As to expression, testis-specific. Expressed in germinal cells from the early meiotic (pachytene) spermatocytes and during spermiogenesis in the round and elongating spermatids until the condensed late spermatids. No expression seen in spermatogonia.

Its subcellular location is the nucleus. Testis-specific chromatin protein that specifically binds histone H4 acetylated at 'Lys-5' and 'Lys-8' (H4K5ac and H4K8ac, respectively) and plays a key role in spermatogenesis. Required in late pachytene spermatocytes: plays a role in meiotic and post-meiotic cells by binding to acetylated histones at the promoter of specific meiotic and post-meiotic genes, facilitating their activation at the appropriate time. In the post-meiotic phase of spermatogenesis, binds to hyperacetylated histones and participates in their general removal from DNA. Also recognizes and binds a subset of butyrylated histones: able to bind histone H4 butyrylated at 'Lys-8' (H4K8ac), while it is not able to bind H4 butyrylated at 'Lys-5' (H4K5ac). Also acts as a component of the splicing machinery in pachytene spermatocytes and round spermatids and participates in 3'-UTR truncation of specific mRNAs in post-meiotic spermatids. Required for chromocenter organization, a structure comprised of peri-centromeric heterochromatin. In Mus musculus (Mouse), this protein is Bromodomain testis-specific protein (Brdt).